Reading from the N-terminus, the 682-residue chain is Actin-binding LIM protein 3 (682 aa).

The residue at position 1 (methionine 1) is an N-acetylmethionine. LIM zinc-binding domains lie at 21-80, 80-140, 149-208, and 208-268; these read IQCY…LYGT, TRCD…MTSS, SHCA…QFGI, and IKCE…ARAE. Phosphoserine is present on residues serine 277, serine 280, serine 282, serine 286, serine 290, serine 337, serine 372, and serine 373. Disordered stretches follow at residues 372–426 and 440–475; these read SSPG…SYQA and YRKP…PAYS. Tyrosine 376 is modified (phosphotyrosine). 2 positions are modified to phosphoserine: serine 379 and serine 388. Polar residues-rich tracts occupy residues 380-393, 405-425, and 453-466; these read PTYS…TFSR, GRSS…TSYQ, and STAT…DISQ. 3 positions are modified to phosphoserine: serine 492, serine 502, and serine 503. Threonine 542 bears the Phosphothreonine mark. 3 positions are modified to phosphoserine: serine 566, serine 575, and serine 606. The 69-residue stretch at 614–682 folds into the HP domain; sequence MREYKIYPYE…NELKKQARLF (69 aa). Residue arginine 630 is modified to Omega-N-methylarginine.

As to quaternary structure, directly interacts with F-actin and ABRA. As to expression, expressed in heart, brain, lung and liver. In the brain, highly expressed in the olfactory bulb. In the hippocampus, expressed selectively in the CA2 and CA3 fields. In the cerebellum, expressed in internal granular cells.

The protein localises to the cytoplasm. Functionally, may act as scaffold protein. May stimulate ABRA activity and ABRA-dependent SRF transcriptional activity. In Mus musculus (Mouse), this protein is Actin-binding LIM protein 3 (Ablim3).